The chain runs to 157 residues: Protein Smg homolog (157 aa).

It belongs to the Smg family.

This is Protein Smg homolog from Aeromonas salmonicida (strain A449).